The primary structure comprises 162 residues: Troponin C, skeletal muscle (162 aa).

EF-hand domains lie at 17 to 52 (EMIA…LGQN), 53 to 88 (PTKE…QMKE), 93 to 128 (KSEE…TGEH), and 129 to 162 (VTEE…EGVQ). Residues D30, D32, D36, E41, D66, D68, S70, T72, E77, D106, N108, D110, E117, D142, N144, D146, R148, and E153 each contribute to the Ca(2+) site.

This sequence belongs to the troponin C family.

Functionally, troponin is the central regulatory protein of striated muscle contraction. Tn consists of three components: Tn-I which is the inhibitor of actomyosin ATPase, Tn-T which contains the binding site for tropomyosin and Tn-C. The binding of calcium to Tn-C abolishes the inhibitory action of Tn on actin filaments. This Meleagris gallopavo (Wild turkey) protein is Troponin C, skeletal muscle (TNNC2).